A 267-amino-acid polypeptide reads, in one-letter code: Cell division protein FtsQ (267 aa).

Over 1 to 32 the chain is Cytoplasmic; it reads MRKKTSSNKKNTAKKNNNISLHRKLGLIYKKT. Residues 33–53 traverse the membrane as a helical segment; sequence ILILKIVLIIFICLFAFTKYF. The Periplasmic portion of the chain corresponds to 54–267; sequence ASLKSYLKTN…DKNKYYIEKY (214 aa). The 69-residue stretch at 73–141 folds into the POTRA domain; it reads FKLENVIIEG…STIYIKLFER (69 aa).

The protein belongs to the FtsQ/DivIB family. FtsQ subfamily.

Its subcellular location is the cell inner membrane. Essential cell division protein. In Rickettsia bellii (strain RML369-C), this protein is Cell division protein FtsQ.